The primary structure comprises 143 residues: Large ribosomal subunit protein uL15 (143 aa).

Basic residues-rich tracts occupy residues 1-13 and 23-38; these read MIRK…KQRG and KKHR…GNAG. Residues 1–38 are disordered; that stretch reads MIRKSKKITKQRGSRTCGYGEAKKHRGAGHRGGRGNAG.

Belongs to the universal ribosomal protein uL15 family. As to quaternary structure, part of the 50S ribosomal subunit.

In terms of biological role, binds to the 23S rRNA. The protein is Large ribosomal subunit protein uL15 of Methanococcus vannielii.